Reading from the N-terminus, the 297-residue chain is Ribosomal RNA small subunit methyltransferase H (297 aa).

S-adenosyl-L-methionine contacts are provided by residues 37 to 39 (GGH), Asp56, Phe87, Asp102, and His109.

This sequence belongs to the methyltransferase superfamily. RsmH family.

It localises to the cytoplasm. The enzyme catalyses cytidine(1402) in 16S rRNA + S-adenosyl-L-methionine = N(4)-methylcytidine(1402) in 16S rRNA + S-adenosyl-L-homocysteine + H(+). In terms of biological role, specifically methylates the N4 position of cytidine in position 1402 (C1402) of 16S rRNA. The polypeptide is Ribosomal RNA small subunit methyltransferase H (Borrelia turicatae (strain 91E135)).